We begin with the raw amino-acid sequence, 497 residues long: MTNRTSLNGRCPVPFLQEDLFPPTGGFIGGRYCQPVGDISCCLPCPIVSWTYGDGLFGKASSASWISVAILPLCIFLLVSYAVLPVKFTHRHYLSVCFTLGICFMEASKIAFIIPLGVKPDQCYNQITPNDMHSSLSCAFTGSLLLLGGWMVVVWSFLRTVAFHLQVCWEVILGPKFMWGALIFGWVVPAVGLTVMLILTGVSFRFGTVCHINIDGALQDYWIPIISFAVAALILQLATMAYCIHVYVKSLFDTDSTTNSSGLPSYSASVRTVSARQAYRRIRRVLQLQWRGVTLVLIIIANVIFFSVTFIELDSSLKPTAENMEKALPWVACLAATNGDREKCDPEAAKFRPSEGLLLAVLVLLSLVGFWNFILFARPSIFHGWVDFFQNKFGTGDGRLEFVSADARTRLGDTRSYEMLNSTGLPSYKSPSPMVRSPSPARMGGTKSPENGHFGRDARYVRPSMSFSSPRPPSAPQGRGWDPKTTFAPAVYREYDD.

N-linked (GlcNAc...) asparagine glycosylation occurs at asparagine 3. Transmembrane regions (helical) follow at residues 66 to 86 (ISVA…VLPV), 98 to 118 (FTLG…PLGV), 138 to 158 (CAFT…WSFL), 179 to 199 (WGAL…MLIL), and 221 to 241 (YWIP…ATMA). An N-linked (GlcNAc...) asparagine glycan is attached at asparagine 259. A run of 2 helical transmembrane segments spans residues 293 to 313 (VTLV…FIEL) and 357 to 377 (LLLA…ILFA). A glycan (N-linked (GlcNAc...) asparagine) is linked at asparagine 421. A disordered region spans residues 428 to 497 (YKSPSPMVRS…APAVYREYDD (70 aa)).

The protein belongs to the G-protein coupled receptor GPR1/git3 family. As to quaternary structure, interacts with gpaA.

The protein localises to the cell membrane. G protein-coupled receptor that plays a role in conidiation and regulation of the biosynthesis of secondary metabolites such as dihydroxynaphthalene (DHN)-melanin, via interaction with the G-protein complex alpha subunit gpaA. In Aspergillus fumigatus (strain CBS 144.89 / FGSC A1163 / CEA10) (Neosartorya fumigata), this protein is G protein-coupled receptor gprM.